Reading from the N-terminus, the 190-residue chain is Inosine triphosphate pyrophosphatase (190 aa).

10 to 15 is an ITP binding site; that stretch reads TGNAKK. Glu40 is a Mg(2+) binding site. Residues Lys52, 68–69, Lys85, 144–147, Lys167, and 172–173 contribute to the ITP site; these read DT, FGWD, and HR.

It belongs to the HAM1 NTPase family. Homodimer. Mg(2+) serves as cofactor. Requires Mn(2+) as cofactor.

It is found in the cytoplasm. It carries out the reaction ITP + H2O = IMP + diphosphate + H(+). The catalysed reaction is dITP + H2O = dIMP + diphosphate + H(+). It catalyses the reaction XTP + H2O = XMP + diphosphate + H(+). In terms of biological role, pyrophosphatase that hydrolyzes non-canonical purine nucleotides such as inosine triphosphate (ITP), deoxyinosine triphosphate (dITP) or xanthosine 5'-triphosphate (XTP) to their respective monophosphate derivatives. The enzyme does not distinguish between the deoxy- and ribose forms. Probably excludes non-canonical purines from RNA and DNA precursor pools, thus preventing their incorporation into RNA and DNA and avoiding chromosomal lesions. This Culex quinquefasciatus (Southern house mosquito) protein is Inosine triphosphate pyrophosphatase.